We begin with the raw amino-acid sequence, 341 residues long: tRNA N6-adenosine threonylcarbamoyltransferase (341 aa).

2 residues coordinate Fe cation: His115 and His119. Residues 137-141 (IVSGG), Asp170, Gly183, Asp187, and Asn276 each bind substrate. Residue Asp304 participates in Fe cation binding.

The protein belongs to the KAE1 / TsaD family. Fe(2+) serves as cofactor.

The protein resides in the cytoplasm. It catalyses the reaction L-threonylcarbamoyladenylate + adenosine(37) in tRNA = N(6)-L-threonylcarbamoyladenosine(37) in tRNA + AMP + H(+). In terms of biological role, required for the formation of a threonylcarbamoyl group on adenosine at position 37 (t(6)A37) in tRNAs that read codons beginning with adenine. Is involved in the transfer of the threonylcarbamoyl moiety of threonylcarbamoyl-AMP (TC-AMP) to the N6 group of A37, together with TsaE and TsaB. TsaD likely plays a direct catalytic role in this reaction. In Staphylococcus aureus (strain MSSA476), this protein is tRNA N6-adenosine threonylcarbamoyltransferase.